Consider the following 477-residue polypeptide: NADH-quinone oxidoreductase subunit N (477 aa).

Transmembrane regions (helical) follow at residues 7-27 (VLAH…LILI), 37-57 (GPMT…LVLG), 77-97 (FMKV…QTYL), 109-129 (ILIL…GLIA), 162-182 (FVLG…IYGF), 201-221 (LGVV…MSTV), 233-253 (GAPT…AIAI), 272-292 (IIVF…IGQT), 297-317 (LMAY…AAGT), 323-343 (GVLA…AAIL), 369-389 (AFFL…AGFF), 402-424 (HLYP…YLRI), and 446-466 (AVLI…GSFV).

It belongs to the complex I subunit 2 family. In terms of assembly, NDH-1 is composed of 14 different subunits. Subunits NuoA, H, J, K, L, M, N constitute the membrane sector of the complex.

It is found in the cell inner membrane. The catalysed reaction is a quinone + NADH + 5 H(+)(in) = a quinol + NAD(+) + 4 H(+)(out). Functionally, NDH-1 shuttles electrons from NADH, via FMN and iron-sulfur (Fe-S) centers, to quinones in the respiratory chain. The immediate electron acceptor for the enzyme in this species is believed to be ubiquinone. Couples the redox reaction to proton translocation (for every two electrons transferred, four hydrogen ions are translocated across the cytoplasmic membrane), and thus conserves the redox energy in a proton gradient. The protein is NADH-quinone oxidoreductase subunit N of Beijerinckia indica subsp. indica (strain ATCC 9039 / DSM 1715 / NCIMB 8712).